A 228-amino-acid polypeptide reads, in one-letter code: MNLATQIRGGLIVSCQAPADSPLAAPEIIAAMAKAAVLRGAVAVRINTPAHIQAVRQAVNVPIIGLWKQTLPAYPVYITPRFADAVAVAAAGADIIALDATARSRPEPLQDLIQRIHNELGKPVMADIDSLENAAAAVAAGADWVGTTLFGYTETTAHTPPPSWSLLSQLVEHLSVPILSEGGIASPTMAAKALGLGAWAVVVGTDITGIDLKVQQYVAALKANTDLS.

It belongs to the NanE family.

It catalyses the reaction an N-acyl-D-glucosamine 6-phosphate = an N-acyl-D-mannosamine 6-phosphate. The protein operates within amino-sugar metabolism; N-acetylneuraminate degradation; D-fructose 6-phosphate from N-acetylneuraminate: step 3/5. Converts N-acetylmannosamine-6-phosphate (ManNAc-6-P) to N-acetylglucosamine-6-phosphate (GlcNAc-6-P). In Thermosynechococcus vestitus (strain NIES-2133 / IAM M-273 / BP-1), this protein is Putative N-acetylmannosamine-6-phosphate 2-epimerase.